The sequence spans 230 residues: Urease accessory protein UreE (230 aa).

The span at 200-210 shows a compositional bias: basic residues; sequence HAIHSHGTGHT. The interval 200-230 is disordered; it reads HAIHSHGTGHTHSHDHDHSHSHGDHDHDHKH. Residues 211-230 are compositionally biased toward basic and acidic residues; that stretch reads HSHDHDHSHSHGDHDHDHKH.

It belongs to the UreE family.

It is found in the cytoplasm. Functionally, involved in urease metallocenter assembly. Binds nickel. Probably functions as a nickel donor during metallocenter assembly. The sequence is that of Urease accessory protein UreE from Yersinia enterocolitica serotype O:8 / biotype 1B (strain NCTC 13174 / 8081).